The chain runs to 141 residues: uncharacterized protein (141 aa).

The chain crosses the membrane as a helical span at residues 114 to 134 (ILFTCYIQSFSLLISNFFIAI).

The protein resides in the membrane. This is an uncharacterized protein from Schizosaccharomyces pombe (strain 972 / ATCC 24843) (Fission yeast).